A 28-amino-acid polypeptide reads, in one-letter code: MIINHNMSAMFAQRTLGVTNNAIGKDME.

The protein belongs to the bacterial flagellin family. As to quaternary structure, the flagellum consists of an outer layer composed of repeating units of FlaA around a core that contains several antigenically related polypeptides.

It is found in the periplasmic flagellum. Its subcellular location is the periplasm. Its function is as follows. Component of the core of the flagella. This Treponema phagedenis protein is Flagellar filament 34 kDa core protein.